The sequence spans 429 residues: Glutamate-1-semialdehyde 2,1-aminomutase (429 aa).

Lys-267 is subject to N6-(pyridoxal phosphate)lysine.

Belongs to the class-III pyridoxal-phosphate-dependent aminotransferase family. HemL subfamily. As to quaternary structure, homodimer. The cofactor is pyridoxal 5'-phosphate.

Its subcellular location is the cytoplasm. It carries out the reaction (S)-4-amino-5-oxopentanoate = 5-aminolevulinate. The protein operates within porphyrin-containing compound metabolism; protoporphyrin-IX biosynthesis; 5-aminolevulinate from L-glutamyl-tRNA(Glu): step 2/2. The sequence is that of Glutamate-1-semialdehyde 2,1-aminomutase from Xanthomonas oryzae pv. oryzae (strain PXO99A).